The sequence spans 29 residues: Cyclotide vibi-A (29 aa).

The segment at residues 1–29 (GLPVCGETCFGGTCNTPGCSCSYPICTRN) is a cross-link (cyclopeptide (Gly-Asn)). 3 disulfide bridges follow: Cys-5–Cys-19, Cys-9–Cys-21, and Cys-14–Cys-26.

In terms of processing, this is a cyclic peptide.

In terms of biological role, probably participates in a plant defense mechanism. This chain is Cyclotide vibi-A, found in Viola biflora (Yellow wood violet).